The sequence spans 405 residues: Eukaryotic initiation factor 4A (405 aa).

The short motif at 32 to 60 (PTFESMGLREELLRGIFNYGFEKPSAIQQ) is the Q motif element. The 171-residue stretch at 63–233 (ILPIIKGRDT…EKFMTKPVRI (171 aa)) folds into the Helicase ATP-binding domain. 76 to 83 (AQSGTGKT) provides a ligand contact to ATP. The short motif at 181–184 (DEAD) is the DEAD box element. The Helicase C-terminal domain maps to 244–405 (GIKQFFVSVE…EMPVNFASII (162 aa)).

Belongs to the DEAD box helicase family. eIF4A subfamily.

The protein localises to the cytoplasm. It catalyses the reaction ATP + H2O = ADP + phosphate + H(+). ATP-dependent RNA helicase which is a subunit of the eIF4F complex involved in cap recognition and is required for mRNA binding to ribosome. In the current model of translation initiation, eIF4A unwinds RNA secondary structures in the 5'-UTR of mRNAs which is necessary to allow efficient binding of the small ribosomal subunit, and subsequent scanning for the initiator codon. The sequence is that of Eukaryotic initiation factor 4A (tifA) from Dictyostelium discoideum (Social amoeba).